Reading from the N-terminus, the 174-residue chain is Gamma-crystallin F (174 aa).

2 consecutive Beta/gamma crystallin 'Greek key' domains span residues 2 to 40 and 41 to 83; these read GKIT…RVDS and GCWM…RLIP. Positions 84–87 are connecting peptide; that stretch reads HTGS. Beta/gamma crystallin 'Greek key' domains lie at 88–128 and 129–171; these read HRLR…NVLE and GWWV…RRAV.

The protein belongs to the beta/gamma-crystallin family.

Functionally, crystallins are the dominant structural components of the vertebrate eye lens. This Bos taurus (Bovine) protein is Gamma-crystallin F (CRYGF).